The following is a 250-amino-acid chain: Large ribosomal subunit protein uL29m (250 aa).

Lys-144 carries the N6-acetyllysine modification.

The protein belongs to the universal ribosomal protein uL29 family. Component of the mitochondrial large ribosomal subunit (mt-LSU). Mature mammalian 55S mitochondrial ribosomes consist of a small (28S) and a large (39S) subunit. The 28S small subunit contains a 12S ribosomal RNA (12S mt-rRNA) and 30 different proteins. The 39S large subunit contains a 16S rRNA (16S mt-rRNA), a copy of mitochondrial valine transfer RNA (mt-tRNA(Val)), which plays an integral structural role, and 52 different proteins.

The protein resides in the mitochondrion. This is Large ribosomal subunit protein uL29m (MRPL47) from Homo sapiens (Human).